We begin with the raw amino-acid sequence, 344 residues long: MRKLFLDAFGEKKLDKPPVWIMRQAGRYLPEYRAVRAKFDNFMDMCRNADACCEVALHPLQRYDLDAAIVFSDILTIPEAMGMDLKFIKGTGPVFSEPIQSQKDLDKLKSIEDSIGSLDYVYNAVKTTSSAINVPLIGFTGSPWTLAAYMIEGSGSKQFNKLRKMMYANPQLMHSLLQRLADITIIYLLEQVKAGASSVMIFDTWGGILPLEHYKNFSLKYKEYIAKNVKQKINIPIVFFTKGGSNFFEEIKDKSCDGVGVDWSVTLKQARHRIGVGKVLQGNFDPAFLYGSKQSIRETVRANIEFIQSDKLNNYIVNLGHGIYPDIDPDSVRVMIDAIREFSA.

Substrate is bound by residues 23–27 (RQAGR), Asp73, Tyr149, Thr204, and His321.

Belongs to the uroporphyrinogen decarboxylase family. Homodimer.

The protein localises to the cytoplasm. The enzyme catalyses uroporphyrinogen III + 4 H(+) = coproporphyrinogen III + 4 CO2. The protein operates within porphyrin-containing compound metabolism; protoporphyrin-IX biosynthesis; coproporphyrinogen-III from 5-aminolevulinate: step 4/4. Functionally, catalyzes the decarboxylation of four acetate groups of uroporphyrinogen-III to yield coproporphyrinogen-III. This is Uroporphyrinogen decarboxylase from Francisella tularensis subsp. mediasiatica (strain FSC147).